A 472-amino-acid polypeptide reads, in one-letter code: Acetyl-CoA decarbonylase/synthase complex subunit beta 2 (472 aa).

C189, C192, C278, and C280 together coordinate [Ni-Fe-S] cluster.

It belongs to the CdhC family. In terms of assembly, monomer. The ACDS complex is made up of alpha, epsilon, beta, gamma and delta chains with a probable stoichiometry of (alpha(2)epsilon(2))(4)-beta(8)-(gamma(1)delta(1))(8) (Potential). The cofactor is [Ni-Fe-S] cluster.

It catalyses the reaction Co(I)-[corrinoid Fe-S protein] + acetyl-CoA + H(+) = methyl-Co(III)-[corrinoid Fe-S protein] + CO + CoA. Its pathway is one-carbon metabolism; methanogenesis from acetate. Its function is as follows. Part of a complex that catalyzes the reversible cleavage of acetyl-CoA, allowing growth on acetate as sole source of carbon and energy. The alpha-epsilon complex generates CO from CO(2), while the beta subunit (this protein) combines the CO with CoA and a methyl group to form acetyl-CoA. The methyl group, which is incorporated into acetyl-CoA, is transferred to the beta subunit by a corrinoid iron-sulfur protein (the gamma-delta complex). The chain is Acetyl-CoA decarbonylase/synthase complex subunit beta 2 (cdhC2) from Methanosarcina thermophila.